We begin with the raw amino-acid sequence, 460 residues long: Cysteine--tRNA ligase (460 aa).

Cys29 is a Zn(2+) binding site. The 'HIGH' region signature appears at 31 to 41; that stretch reads MTVYDYMHIGH. Zn(2+) is bound by residues Cys210, His235, and Glu239. A 'KMSKS' region motif is present at residues 267-271; sequence KMSKS. An ATP-binding site is contributed by Lys270.

This sequence belongs to the class-I aminoacyl-tRNA synthetase family. Monomer. Zn(2+) is required as a cofactor.

The protein localises to the cytoplasm. The enzyme catalyses tRNA(Cys) + L-cysteine + ATP = L-cysteinyl-tRNA(Cys) + AMP + diphosphate. The protein is Cysteine--tRNA ligase of Coxiella burnetii (strain RSA 493 / Nine Mile phase I).